We begin with the raw amino-acid sequence, 1027 residues long: Sodium/potassium-transporting ATPase subunit alpha-1 (1027 aa).

Residues 1 to 5 (MGVGD) constitute a propeptide that is removed on maturation. Residues 1 to 10 (MGVGDGRDQY) show a composition bias toward basic and acidic residues. The disordered stretch occupies residues 1–39 (MGVGDGRDQYELAAMSEQSGKKKSKNKKEKKEKDMDELK). Residues 6–90 (GRDQYELAAM…NALTPPPTTP (85 aa)) are Cytoplasmic-facing. Position 16 is a phosphoserine; by PKC (S16). Residues 29–39 (EKKEKDMDELK) are compositionally biased toward basic and acidic residues. Residues 85–87 (PPP) are interaction with phosphoinositide-3 kinase. Residues 91–111 (EWVKFCKQMFGGFSMLLWTGA) traverse the membrane as a helical segment. Residues 112-134 (VLCFLAYGILAAMEDEPANDNLY) are Extracellular-facing. A helical transmembrane segment spans residues 135–155 (LGVVLSAVVIITGCFSYYQDA). The Cytoplasmic segment spans residues 156 to 291 (KSSKIMDSFK…VGRTPISIEI (136 aa)). The interval 217-238 (DNSSLTGESEPQTRSPDFSNDN) is disordered. A helical transmembrane segment spans residues 292 to 311 (EHFIHIITGVAVFLGVSFLL). The Extracellular segment spans residues 312–323 (LSLVLGYSWLEA). The chain crosses the membrane as a helical span at residues 324 to 341 (VIFLIGIIVANVPEGLLA). Residues 342–776 (TVTVCLTLTA…EEGRLIFDNL (435 aa)) are Cytoplasmic-facing. D379 functions as the 4-aspartylphosphate intermediate in the catalytic mechanism. ATP is bound at residue K490. Mg(2+)-binding residues include D721 and D725. The helical transmembrane segment at 777–796 (KKSIAYTLTSNIPEITPFLF) threads the bilayer. Topologically, residues 797 to 806 (FIIANIPLPL) are extracellular. Residues 807-827 (GTVTILCIDLGTDMLPAISLA) form a helical membrane-spanning segment. Over 828–847 (YEAAESDIMKRQPRNPKTDK) the chain is Cytoplasmic. The chain crosses the membrane as a helical span at residues 848-870 (LVNERLISIAYGQIGMIQALAGF). Residues 871–922 (FTYFVILAENGFLPPRLLGIRMNWDDKYINDLEDSYGQQWTYEQRKIVEFTC) are Extracellular-facing. Residues 923 to 942 (HTAFFTSIVIVQWADLIICK) traverse the membrane as a helical segment. The Cytoplasmic segment spans residues 943 to 955 (TRRNSVFQQGMKN). A Phosphoserine; by PKA modification is found at S947. Residues 956–974 (KILIFGLFEETALAAFLSY) form a helical membrane-spanning segment. Residues 975–989 (CPGMDVALRMYPLKP) are Extracellular-facing. Residues 990 to 1010 (NWWFCAFPYSLLIFIYDEIRK) form a helical membrane-spanning segment. The Cytoplasmic portion of the chain corresponds to 1011–1027 (LILRRNPGGWMERETYY).

The protein belongs to the cation transport ATPase (P-type) (TC 3.A.3) family. Type IIC subfamily. The sodium/potassium-transporting ATPase is composed of a catalytic alpha subunit, an auxiliary non-catalytic beta subunit and an additional regulatory subunit.

Its subcellular location is the cell membrane. It localises to the sarcolemma. It carries out the reaction K(+)(out) + Na(+)(in) + ATP + H2O = K(+)(in) + Na(+)(out) + ADP + phosphate + H(+). In terms of biological role, this is the catalytic component of the active enzyme, which catalyzes the hydrolysis of ATP coupled with the exchange of sodium and potassium ions across the plasma membrane. This action creates the electrochemical gradient of sodium and potassium ions, providing the energy for active transport of various nutrients. This Catostomus commersonii (White sucker) protein is Sodium/potassium-transporting ATPase subunit alpha-1 (atp1a1).